The chain runs to 412 residues: Acetate kinase (412 aa).

Mg(2+) is bound at residue Asn-10. An ATP-binding site is contributed by Lys-17. Positions 40–61 (ETSRLAHTPSAGGGAEPRERTG) are disordered. Arg-95 is a substrate binding site. Asp-152 functions as the Proton donor/acceptor in the catalytic mechanism. Residues 212-216 (HLGNG), 286-288 (DMR), and 334-338 (GVGEN) each bind ATP. Glu-388 provides a ligand contact to Mg(2+).

This sequence belongs to the acetokinase family. As to quaternary structure, homodimer. Requires Mg(2+) as cofactor. Mn(2+) serves as cofactor.

It localises to the cytoplasm. The enzyme catalyses acetate + ATP = acetyl phosphate + ADP. It functions in the pathway metabolic intermediate biosynthesis; acetyl-CoA biosynthesis; acetyl-CoA from acetate: step 1/2. Its function is as follows. Catalyzes the formation of acetyl phosphate from acetate and ATP. Can also catalyze the reverse reaction. The chain is Acetate kinase from Streptomyces griseus subsp. griseus (strain JCM 4626 / CBS 651.72 / NBRC 13350 / KCC S-0626 / ISP 5235).